Reading from the N-terminus, the 272-residue chain is 3',5'-cyclic adenosine monophosphate phosphodiesterase CpdA (272 aa).

Positions 21, 23, 63, 93, 161, 200, and 202 each coordinate Fe cation. Residues His-23, Asp-63, and 93–94 (NH) each bind AMP. An AMP-binding site is contributed by His-202.

Belongs to the cyclic nucleotide phosphodiesterase class-III family. Monomer. The cofactor is a divalent metal cation.

The enzyme catalyses 3',5'-cyclic AMP + H2O = AMP + H(+). With respect to regulation, activated by iron. Other divalent metal ions have no effect. Hydrolyzes cAMP to 5'-AMP. Plays an important regulatory role in modulating the intracellular concentration of cAMP, thereby influencing cAMP-dependent processes. Specifically required for regulation of virulence factors. Can also hydrolyze cGMP, but cGMP is unlikely to be synthesized by P.aeruginosa and cAMP is probably the biologically relevant substrate for CpdA in vivo. The chain is 3',5'-cyclic adenosine monophosphate phosphodiesterase CpdA from Pseudomonas aeruginosa.